The sequence spans 770 residues: Potassium transporter 25 (770 aa).

The Cytoplasmic portion of the chain corresponds to 1 to 23 (MDLEAAHGAAAAPGKRRRRARES). The helical transmembrane segment at 24–44 (WGASLLLAYQSLGVVYGDVAT) threads the bilayer. At 45-70 (SPLYVYKSAFAGDDIQHSAGNEEIYG) the chain is on the extracellular side. A helical transmembrane segment spans residues 71–91 (VLSFVFWTLTLISLVKYVLIV). The Cytoplasmic segment spans residues 92-152 (LRADDGGEGG…MLERYRVLQR (61 aa)). The chain crosses the membrane as a helical span at residues 153–173 (LLLLFALLGTCMVIGDGVLTP). Over 174-194 (AVSVYSAVSGLELSMEHEHHK) the chain is Extracellular. A helical transmembrane segment spans residues 195–215 (YVQLPVTCAILIGLFALQHYG). The Cytoplasmic portion of the chain corresponds to 216 to 218 (THR). Residues 219-239 (VGFIFAPIVCVWLLCISAIGV) form a helical membrane-spanning segment. The Extracellular portion of the chain corresponds to 240 to 267 (YNIVHWNHHVYRALSPYYMYQFLKKTQT). A helical transmembrane segment spans residues 268-288 (GGWMSLGGILLCVTGSEAMYA). Topologically, residues 289 to 299 (DLGHFSQSSIK) are cytoplasmic. The helical transmembrane segment at 300–320 (IAFMSVVYPALVLAYMGQAAY) threads the bilayer. At 321 to 346 (ISQHHSFENAYHIGFYVSVPEKLRWP) the chain is on the extracellular side. The chain crosses the membrane as a helical span at residues 347-367 (VLVIAILAAVVGSQAVITGTF). Over 368 to 394 (SIIKQCSSLSCFPGVKIVHTSSTVHGQ) the chain is Cytoplasmic. The chain crosses the membrane as a helical span at residues 395–415 (IYIPEINWILMILCLAVTLGF). At 416-425 (RNTKHLANAQ) the chain is on the extracellular side. A helical membrane pass occupies residues 426–446 (GLAVITVMLVTTCLMSLVIVL). The Cytoplasmic segment spans residues 447-451 (CWNKS). Residues 452 to 472 (IFLALGFLIFFGTIEVLYFSA) traverse the membrane as a helical segment. Over 473–479 (SLVKFHE) the chain is Extracellular. A helical membrane pass occupies residues 480-500 (GAWVPITLSFIFMIVMCVWHY). The Cytoplasmic portion of the chain corresponds to 501-770 (GTIKKYEFDF…TLEVGMVYQV (270 aa)).

The protein belongs to the HAK/KUP transporter (TC 2.A.72.3) family.

Its subcellular location is the membrane. In terms of biological role, high-affinity potassium transporter. In Oryza sativa subsp. japonica (Rice), this protein is Potassium transporter 25 (HAK25).